The primary structure comprises 508 residues: Steroid 17-alpha-hydroxylase/17,20 lyase (508 aa).

A substrate-binding site is contributed by Asn202. Residue Cys442 participates in heme binding.

Belongs to the cytochrome P450 family. It depends on heme as a cofactor.

The protein localises to the endoplasmic reticulum membrane. The protein resides in the microsome membrane. The enzyme catalyses a C21-steroid + reduced [NADPH--hemoprotein reductase] + O2 = a 17alpha-hydroxy-C21-steroid + oxidized [NADPH--hemoprotein reductase] + H2O + H(+). It catalyses the reaction progesterone + reduced [NADPH--hemoprotein reductase] + O2 = 17alpha-hydroxyprogesterone + oxidized [NADPH--hemoprotein reductase] + H2O + H(+). It carries out the reaction pregnenolone + reduced [NADPH--hemoprotein reductase] + O2 = 17alpha-hydroxypregnenolone + oxidized [NADPH--hemoprotein reductase] + H2O + H(+). The catalysed reaction is 17alpha-hydroxyprogesterone + reduced [NADPH--hemoprotein reductase] + O2 = androst-4-ene-3,17-dione + acetate + oxidized [NADPH--hemoprotein reductase] + H2O + 2 H(+). The enzyme catalyses 17alpha-hydroxyprogesterone + reduced [NADPH--hemoprotein reductase] + O2 = 16alpha,17alpha-dihydroxyprogesterone + oxidized [NADPH--hemoprotein reductase] + H2O + H(+). It catalyses the reaction 16alpha,17alpha-dihydroxyprogesterone + reduced [NADPH--hemoprotein reductase] + O2 = 6beta,16alpha,17alpha-trihydroxyprogesterone + oxidized [NADPH--hemoprotein reductase] + H2O + H(+). It carries out the reaction 17alpha-hydroxypregnenolone + reduced [NADPH--hemoprotein reductase] + O2 = 3beta-hydroxyandrost-5-en-17-one + acetate + oxidized [NADPH--hemoprotein reductase] + H2O + 2 H(+). The catalysed reaction is 16alpha,17alpha-dihydroxypregnenolone + reduced [NADPH--hemoprotein reductase] + O2 = 3beta,16alpha-dihydroxy-androst-5-en-17-one + acetate + oxidized [NADPH--hemoprotein reductase] + H2O + 2 H(+). The enzyme catalyses 3beta-hydroxyandrost-5-en-17-one + reduced [NADPH--hemoprotein reductase] + O2 = 3beta,16alpha-dihydroxy-androst-5-en-17-one + oxidized [NADPH--hemoprotein reductase] + H2O + H(+). It catalyses the reaction androst-4-ene-3,17-dione + reduced [NADPH--hemoprotein reductase] + O2 = 16alpha-hydroxyandrost-4-ene-3,17-dione + oxidized [NADPH--hemoprotein reductase] + H2O + H(+). It functions in the pathway steroid hormone biosynthesis. Its pathway is steroid biosynthesis; glucocorticoid biosynthesis. Regulated predominantly by intracellular cAMP levels. The 17,20-lyase activity is stimulated by cytochrome b5, which acts as an allosteric effector increasing the Vmax of the lyase activity. Functionally, a cytochrome P450 monooxygenase involved in corticoid and androgen biosynthesis. Catalyzes 17-alpha hydroxylation of C21 steroids, which is common for both pathways. A second oxidative step, required only for androgen synthesis, involves an acyl-carbon cleavage. The 17-alpha hydroxy intermediates, as part of adrenal glucocorticoids biosynthesis pathway, are precursors of cortisol. Hydroxylates steroid hormones, pregnenolone and progesterone to form 17-alpha hydroxy metabolites, followed by the cleavage of the C17-C20 bond to form C19 steroids, dehydroepiandrosterone (DHEA) and androstenedione. Has 16-alpha hydroxylase activity. Catalyzes 16-alpha hydroxylation of 17-alpha hydroxy pregnenolone, followed by the cleavage of the C17-C20 bond to form 16-alpha-hydroxy DHEA. Also 16-alpha hydroxylates androgens, relevant for estriol synthesis. Mechanistically, uses molecular oxygen inserting one oxygen atom into a substrate, and reducing the second into a water molecule, with two electrons provided by NADPH via cytochrome P450 reductase (CPR; NADPH-ferrihemoprotein reductase). This chain is Steroid 17-alpha-hydroxylase/17,20 lyase (CYP17A1), found in Macaca fascicularis (Crab-eating macaque).